The chain runs to 1030 residues: Pro-apoptotic serine protease NMA111 (1030 aa).

Residues 1–48 form a disordered region; sequence MNGTTSPIAARSKRKEPPHTVDGRHPKHHRTNGEVAPAADNTPDNQDE. Positions 15–24 are enriched in basic and acidic residues; that stretch reads KEPPHTVDGR. A serine protease region spans residues 89–279; the sequence is VVSIRFCQTC…LPLDRPLRAL (191 aa). Catalysis depends on charge relay system residues H127, D158, and S240. 2 consecutive PDZ domains span residues 312–384 and 880–960; these read PEWE…LRGG and AVSF…LRAM.

Belongs to the peptidase S1C family.

The protein localises to the nucleus. Functionally, nuclear serine protease which mediates apoptosis. This is Pro-apoptotic serine protease NMA111 (NMA111) from Chaetomium globosum (strain ATCC 6205 / CBS 148.51 / DSM 1962 / NBRC 6347 / NRRL 1970) (Soil fungus).